Consider the following 974-residue polypeptide: Glycine dehydrogenase (decarboxylating) (974 aa).

Position 720 is an N6-(pyridoxal phosphate)lysine (Lys720).

It belongs to the GcvP family. In terms of assembly, the glycine cleavage system is composed of four proteins: P, T, L and H. Pyridoxal 5'-phosphate is required as a cofactor.

It carries out the reaction N(6)-[(R)-lipoyl]-L-lysyl-[glycine-cleavage complex H protein] + glycine + H(+) = N(6)-[(R)-S(8)-aminomethyldihydrolipoyl]-L-lysyl-[glycine-cleavage complex H protein] + CO2. Functionally, the glycine cleavage system catalyzes the degradation of glycine. The P protein binds the alpha-amino group of glycine through its pyridoxal phosphate cofactor; CO(2) is released and the remaining methylamine moiety is then transferred to the lipoamide cofactor of the H protein. This chain is Glycine dehydrogenase (decarboxylating), found in Cupriavidus metallidurans (strain ATCC 43123 / DSM 2839 / NBRC 102507 / CH34) (Ralstonia metallidurans).